Consider the following 30-residue polypeptide: ADNRRPIWNLGHMVNALKQIPTFLXDGANA.

The active site involves H12.

It belongs to the arthropod phospholipase D family. Class I subfamily. The cofactor is Mg(2+). Contains 1 disulfide bond. In terms of tissue distribution, expressed by the venom gland.

It localises to the secreted. The catalysed reaction is an N-(acyl)-sphingosylphosphocholine = an N-(acyl)-sphingosyl-1,3-cyclic phosphate + choline. It carries out the reaction an N-(acyl)-sphingosylphosphoethanolamine = an N-(acyl)-sphingosyl-1,3-cyclic phosphate + ethanolamine. It catalyses the reaction a 1-acyl-sn-glycero-3-phosphocholine = a 1-acyl-sn-glycero-2,3-cyclic phosphate + choline. The enzyme catalyses a 1-acyl-sn-glycero-3-phosphoethanolamine = a 1-acyl-sn-glycero-2,3-cyclic phosphate + ethanolamine. Its function is as follows. Dermonecrotic toxins cleave the phosphodiester linkage between the phosphate and headgroup of certain phospholipids (sphingolipid and lysolipid substrates), forming an alcohol (often choline) and a cyclic phosphate. This toxin acts on sphingomyelin (SM). It may also act on ceramide phosphoethanolamine (CPE), lysophosphatidylcholine (LPC) and lysophosphatidylethanolamine (LPE), but not on lysophosphatidylserine (LPS), and lysophosphatidylglycerol (LPG). It acts by transphosphatidylation, releasing exclusively cyclic phosphate products as second products. In vivo, intradermal injection induces dermonecrosis. Induces hemolysis, increased vascular permeability, edema, inflammatory response, and platelet aggregation. This is Dermonecrotic toxin LlSicTox-alphaIII-1 from Loxosceles laeta (South American recluse spider).